A 212-amino-acid chain; its full sequence is Troponin I, cardiac muscle (212 aa).

A compositionally biased stretch (polar residues) spans 1 to 11 (MADRSGGSTAG). The interval 1-45 (MADRSGGSTAGDTVPAPPPVRRRSSANYRAYATEPHAKKKSKISA) is disordered. A2 bears the N-acetylalanine mark. S5 bears the Phosphoserine mark. A phosphoserine; by PKA and PKD/PRKD1 mark is found at S24 and S25. Y28 is subject to Phosphotyrosine. At T33 the chain carries Phosphothreonine; by STK4/MST1. An involved in binding TNC region spans residues 34 to 81 (EPHAKKKSKISASRKLQLKTLMLQIAKQELEREAEERRGEKGRALSTR). 2 positions are modified to phosphoserine; by PKC/PRKCE: S44 and S46. The residue at position 53 (T53) is a Phosphothreonine; by STK4/MST1. S79 bears the Phosphoserine mark. Residue T80 is modified to Phosphothreonine. The interval 131-151 (NQKIFDLRGKFKRPTLRRVRI) is involved in binding TNC and actin. T145 is subject to Phosphothreonine; by STK4/MST1. Phosphoserine; by PAK3 is present on S152. T183 bears the Phosphothreonine mark. At S201 the chain carries Phosphoserine.

This sequence belongs to the troponin I family. Interacts with TRIM63. Binds to actin and tropomyosin. Interacts with STK4/MST1. Phosphorylated at Ser-24 and Ser-25 by PRKD1; phosphorylation reduces myofilament calcium sensitivity. Phosphorylated preferentially at Thr-33. Phosphorylation by STK4/MST1 alters its binding affinity to TNNC1 (cardiac Tn-C) and TNNT2 (cardiac Tn-T). Phosphorylated at Ser-44 and Ser-46 by PRKCE; phosphorylation increases myocardium contractile dysfunction.

In terms of biological role, troponin I is the inhibitory subunit of troponin, the thin filament regulatory complex which confers calcium-sensitivity to striated muscle actomyosin ATPase activity. This is Troponin I, cardiac muscle (TNNI3) from Bos taurus (Bovine).